A 515-amino-acid chain; its full sequence is Spermatogenesis-associated protein 2 (515 aa).

One can recognise a PUB domain in the interval 78-150; that stretch reads ALHCAFSMLE…VYKLKELVES (73 aa). The PIM motif motif lies at 321–338; it reads TYFSTQDDVDLYTDSEPR. The disordered stretch occupies residues 429–452; it reads GHQTQGLDRLAPVHSKPKPSTTAT.

Belongs to the SPATA2 family. As to quaternary structure, interacts (via the PIM motif) with RNF31/HOIP (via the PUB domain); the interaction is direct. Interacts (via the PUB domain) with CYLD; the interaction is direct. As to expression, widely expressed, with highest expression in testis, lung and intestine, and lower expression in brain, heart and spleen. Present at high level in Sertoli cells: expressed from stage I to stage XII of the testis seminiferous epithelium (at protein level).

It localises to the cytoplasm. It is found in the nucleus. In terms of biological role, bridging factor that mediates the recruitment of CYLD to the LUBAC complex, thereby regulating TNF-alpha-induced necroptosis. Acts as a direct binding intermediate that bridges RNF31/HOIP, the catalytic subunit of the LUBAC complex, and the deubiquitinase (CYLD), thereby recruiting CYLD to the TNF-R1 signaling complex (TNF-RSC). Required to activate the 'Met-1'- (linear) and 'Lys-63'-linked deubiquitinase activities of CYLD. Controls the kinase activity of RIPK1 and TNF-alpha-induced necroptosis by promoting 'Met-1'-linked deubiquitination of RIPK1 by CYLD. In Mus musculus (Mouse), this protein is Spermatogenesis-associated protein 2.